The following is a 359-amino-acid chain: Chaperone protein DnaJ (359 aa).

Positions 3-68 (DYYEILGVPK…ERRQTYDRYG (66 aa)) constitute a J domain. The CR-type zinc finger occupies 128–205 (GVSKDIKYKI…CAGKGFIEEQ (78 aa)). Residues Cys141, Cys144, Cys157, Cys160, Cys179, Cys182, Cys193, and Cys196 each contribute to the Zn(2+) site. CXXCXGXG motif repeat units follow at residues 141-148 (CKTCDGTG), 157-164 (CPYCGGSG), 179-186 (CPFCKGSG), and 193-200 (CHDCAGKG).

This sequence belongs to the DnaJ family. In terms of assembly, homodimer. Requires Zn(2+) as cofactor.

It localises to the cytoplasm. Its function is as follows. Participates actively in the response to hyperosmotic and heat shock by preventing the aggregation of stress-denatured proteins and by disaggregating proteins, also in an autonomous, DnaK-independent fashion. Unfolded proteins bind initially to DnaJ; upon interaction with the DnaJ-bound protein, DnaK hydrolyzes its bound ATP, resulting in the formation of a stable complex. GrpE releases ADP from DnaK; ATP binding to DnaK triggers the release of the substrate protein, thus completing the reaction cycle. Several rounds of ATP-dependent interactions between DnaJ, DnaK and GrpE are required for fully efficient folding. Also involved, together with DnaK and GrpE, in the DNA replication of plasmids through activation of initiation proteins. The protein is Chaperone protein DnaJ of Campylobacter hominis (strain ATCC BAA-381 / DSM 21671 / CCUG 45161 / LMG 19568 / NCTC 13146 / CH001A).